A 428-amino-acid chain; its full sequence is Trigger factor (428 aa).

One can recognise a PPIase FKBP-type domain in the interval 163 to 248 (GDTAVIDFEG…VHEVKAKQLP (86 aa)).

This sequence belongs to the FKBP-type PPIase family. Tig subfamily.

Its subcellular location is the cytoplasm. The catalysed reaction is [protein]-peptidylproline (omega=180) = [protein]-peptidylproline (omega=0). Its function is as follows. Involved in protein export. Acts as a chaperone by maintaining the newly synthesized protein in an open conformation. Functions as a peptidyl-prolyl cis-trans isomerase. In Geobacillus thermodenitrificans (strain NG80-2), this protein is Trigger factor.